A 276-amino-acid chain; its full sequence is Diaminopimelate epimerase (276 aa).

Residues asparagine 13, glutamine 46, and asparagine 66 each contribute to the substrate site. Residue cysteine 75 is the Proton donor of the active site. Substrate contacts are provided by residues 76-77, asparagine 159, asparagine 192, and 210-211; these read GN and ER. The Proton acceptor role is filled by cysteine 219. Residue 220 to 221 coordinates substrate; that stretch reads GT.

It belongs to the diaminopimelate epimerase family. In terms of assembly, homodimer.

Its subcellular location is the cytoplasm. The catalysed reaction is (2S,6S)-2,6-diaminopimelate = meso-2,6-diaminopimelate. It functions in the pathway amino-acid biosynthesis; L-lysine biosynthesis via DAP pathway; DL-2,6-diaminopimelate from LL-2,6-diaminopimelate: step 1/1. In terms of biological role, catalyzes the stereoinversion of LL-2,6-diaminopimelate (L,L-DAP) to meso-diaminopimelate (meso-DAP), a precursor of L-lysine and an essential component of the bacterial peptidoglycan. In Pseudomonas fluorescens, this protein is Diaminopimelate epimerase.